Consider the following 481-residue polypeptide: UDP-N-acetylmuramate--L-alanine ligase (481 aa).

Residue 126–132 (GTHGKTT) participates in ATP binding.

Belongs to the MurCDEF family.

The protein localises to the cytoplasm. The enzyme catalyses UDP-N-acetyl-alpha-D-muramate + L-alanine + ATP = UDP-N-acetyl-alpha-D-muramoyl-L-alanine + ADP + phosphate + H(+). It functions in the pathway cell wall biogenesis; peptidoglycan biosynthesis. In terms of biological role, cell wall formation. The protein is UDP-N-acetylmuramate--L-alanine ligase of Marinobacter nauticus (strain ATCC 700491 / DSM 11845 / VT8) (Marinobacter aquaeolei).